Consider the following 4042-residue polypeptide: Polyketide synthase-nonribosomal peptide synthetase phmA (4042 aa).

The Ketosynthase family 3 (KS3) domain occupies asparagine 10–alanine 411. The acyl transferase stretch occupies residues valine 519–aspartate 837. Positions histidine 909–proline 1042 are N-terminal hotdog fold. The tract at residues histidine 909–threonine 1208 is dehydratase (DH) domain. One can recognise a PKS/mFAS DH domain in the interval histidine 909–glutamate 1210. Catalysis depends on histidine 941, which acts as the Proton acceptor; for dehydratase activity. The tract at residues methionine 1057–glutamate 1210 is C-terminal hotdog fold. Catalysis depends on aspartate 1117, which acts as the Proton donor; for dehydratase activity. The interval aspartate 1349 to asparagine 1572 is methyltransferase (MT) domain. Residues threonine 2073 to isoleucine 2246 form a ketoreductase (KR)domain region. The region spanning alanine 2351–leucine 2433 is the Carrier 1 domain. The residue at position 2393 (serine 2393) is an O-(pantetheine 4'-phosphoryl)serine. Disordered stretches follow at residues lysine 2460–alanine 2504 and alanine 2535–aspartate 2554. A compositionally biased stretch (acidic residues) spans glutamate 2479 to alanine 2490. The segment covering asparagine 2495–alanine 2504 has biased composition (polar residues). Low complexity predominate over residues threonine 2536–serine 2549. A condensation region spans residues arginine 2584–glutamine 3019. Residues glutamate 3047–arginine 3443 form an adenylation region. The region spanning lysine 3562–serine 3642 is the Carrier 2 domain. O-(pantetheine 4'-phosphoryl)serine is present on serine 3602. The interval isoleucine 3703–histidine 3924 is reductase-like.

It belongs to the NRP synthetase family.

The protein operates within mycotoxin biosynthesis. Its function is as follows. Hybrid PKS-NRPS synthetase; part of the gene cluster that mediates the biosynthesis of the mycotoxins phomacins, leucine-derived cytochalasans with potent actin polymerization-inhibitory activities and monocot-specific antigerminative activities. The first step in the pathway is catalyzed by the hybrid PKS-NRPS phmA, assisted by the enoyl reductase phmE, that are responsible for fusion of the leucine precursor and the polyketide backbone to produce a 2-pyrrolidone intermediate. The polyketide synthase module (PKS) of phmA is responsible for the synthesis of the polyketide backbone and the downstream nonribosomal peptide synthetase (NRPS) amidates the carboxyl end of the polyketide with the leucine precursor. Because phmA lacks a designated enoylreductase (ER) domain, the required activity is provided the enoyl reductase phmE. Reduction by the hydrolyase phmG, followed by dehydration and intra-molecular Diels-Alder cyclization by the Diels-Alderase phmD then yield the required isoindolone-fused macrocycle. A number of oxidative steps catalyzed by the tailoring cytochrome P450 monooxygenase phmB, the FAD-linked oxidoreductase phmC and the short-chain dehydrogenase/reductase phmF, are further required to afford the final products, phomacin D and phomacin E. In Phaeosphaeria nodorum (strain SN15 / ATCC MYA-4574 / FGSC 10173) (Glume blotch fungus), this protein is Polyketide synthase-nonribosomal peptide synthetase phmA.